The sequence spans 676 residues: RNA helicase NPH-II (676 aa).

In terms of domain architecture, Helicase ATP-binding spans 172–347; sequence FSAWISHRPV…VFLPNPAFIH (176 aa). Position 185–192 (185–192) interacts with ATP; sequence GGTGVGKT. Positions 296-299 match the DEXH box motif; sequence DEVH. In terms of domain architecture, Helicase C-terminal spans 366 to 535; that stretch reads NPSSRMAYIE…NYILYANKFN (170 aa).

The protein belongs to the DEAD box helicase family. DEAH subfamily. In terms of assembly, monomer.

It is found in the virion. It catalyses the reaction ATP + H2O = ADP + phosphate + H(+). Its function is as follows. NTP-dependent helicase that catalyzes unidirectional unwinding of 3'tailed duplex RNAs and plays an important role during transcription of early mRNAs, presumably by preventing R-loop formation behind the elongating RNA polymerase. Might also play a role in the export of newly synthesized mRNA chains out of the core into the cytoplasm. Required for replication and propagation of viral particles. This chain is RNA helicase NPH-II (OPG084), found in Homo sapiens (Human).